A 216-amino-acid polypeptide reads, in one-letter code: N-(5'-phosphoribosyl)anthranilate isomerase (216 aa).

This sequence belongs to the TrpF family.

The catalysed reaction is N-(5-phospho-beta-D-ribosyl)anthranilate = 1-(2-carboxyphenylamino)-1-deoxy-D-ribulose 5-phosphate. The protein operates within amino-acid biosynthesis; L-tryptophan biosynthesis; L-tryptophan from chorismate: step 3/5. The protein is N-(5'-phosphoribosyl)anthranilate isomerase of Leptospira borgpetersenii serovar Hardjo-bovis (strain JB197).